Consider the following 549-residue polypeptide: Peptide transport periplasmic protein SapA (549 aa).

A signal peptide spans Met-1–Ala-21.

It belongs to the bacterial solute-binding protein 5 family.

Its subcellular location is the periplasm. Functionally, involved in a peptide intake transport system that plays a role in the resistance to antimicrobial peptides. The sequence is that of Peptide transport periplasmic protein SapA from Salmonella typhimurium (strain LT2 / SGSC1412 / ATCC 700720).